A 143-amino-acid polypeptide reads, in one-letter code: Large ribosomal subunit protein uL11 (143 aa).

Belongs to the universal ribosomal protein uL11 family. In terms of assembly, part of the ribosomal stalk of the 50S ribosomal subunit. Interacts with L10 and the large rRNA to form the base of the stalk. L10 forms an elongated spine to which L12 dimers bind in a sequential fashion forming a multimeric L10(L12)X complex. One or more lysine residues are methylated.

In terms of biological role, forms part of the ribosomal stalk which helps the ribosome interact with GTP-bound translation factors. The polypeptide is Large ribosomal subunit protein uL11 (Bifidobacterium longum (strain DJO10A)).